Consider the following 377-residue polypeptide: Protein RecA (377 aa).

65 to 72 lines the ATP pocket; the sequence is GPESSGKT. The tract at residues 329–377 is disordered; it reads GDEEAAATKATETKTDAPKDKDKGKTKAKDKPADVTPGQIELAPDKSAK. Over residues 339-361 the composition is skewed to basic and acidic residues; that stretch reads TETKTDAPKDKDKGKTKAKDKPA.

It belongs to the RecA family.

It localises to the cytoplasm. Its function is as follows. Can catalyze the hydrolysis of ATP in the presence of single-stranded DNA, the ATP-dependent uptake of single-stranded DNA by duplex DNA, and the ATP-dependent hybridization of homologous single-stranded DNAs. It interacts with LexA causing its activation and leading to its autocatalytic cleavage. The chain is Protein RecA from Levilactobacillus brevis (strain ATCC 367 / BCRC 12310 / CIP 105137 / JCM 1170 / LMG 11437 / NCIMB 947 / NCTC 947) (Lactobacillus brevis).